The sequence spans 659 residues: uncharacterized protein (659 aa).

An N-terminal signal peptide occupies residues 1 to 25 (MVKRRLSAFGNAFLIYFIIFRLCCC). At 26 to 556 (SPQTSHWCKY…LYQESSFQKR (531 aa)) the chain is on the lumenal side. 4 N-linked (GlcNAc...) asparagine glycosylation sites follow: Asn-94, Asn-111, Asn-128, and Asn-142. One can recognise an SUN domain in the interval 173–335 (AATIDSNIDE…SLLRVYGKTM (163 aa)). N-linked (GlcNAc...) asparagine glycosylation is found at Asn-393 and Asn-415. The tract at residues 417–445 (TGKSESYPATSTRSFNDISPSSSSSYSTA) is disordered. A compositionally biased stretch (polar residues) spans 423–434 (YPATSTRSFNDI). N-linked (GlcNAc...) asparagine glycosylation is found at Asn-495 and Asn-504. The helical transmembrane segment at 557-574 (LLMLQLTVLIVLTVYMAV) threads the bilayer. The Cytoplasmic segment spans residues 575-659 (SRLPENLPTT…IIHSRSHSVC (85 aa)). 2 disordered regions span residues 580-603 (NLPTTRSSSNNPIEASRPPFSRDE) and 632-659 (KRDPNTSIRSIHEREQDKIIHSRSHSVC). Residues 581 to 592 (LPTTRSSSNNPI) are compositionally biased toward polar residues. Over residues 641 to 651 (SIHEREQDKII) the composition is skewed to basic and acidic residues.

This sequence belongs to the SLP1 family. As to quaternary structure, interacts with EMP65.

It is found in the endoplasmic reticulum membrane. Functionally, may be involved in membrane protein folding. This is an uncharacterized protein from Schizosaccharomyces pombe (strain 972 / ATCC 24843) (Fission yeast).